The chain runs to 567 residues: Delta(24)-sterol reductase (567 aa).

Residues 1-24 (MSDLEAPLRPKRKKIWVDYFVKFR) are Lumenal-facing. The chain crosses the membrane as a helical; Signal-anchor span at residues 25 to 45 (WILVIFVVLPISFTLYFLTYL). Positions 45–231 (LGDVRSEWKS…VAAEVKLIPI (187 aa)) constitute an FAD-binding PCMH-type domain. The Cytoplasmic portion of the chain corresponds to 46–567 (GDVRSEWKSF…AYPEVDQPPD (522 aa)). Residues 520–541 (CRRKYGAVGTFMSVYYKCKKGR) are interaction with calmodulin. The disordered stretch occupies residues 548-567 (REAEQAHLDTAYPEVDQPPD).

The protein belongs to the DIMINUTO family. As to expression, highly expressed in the apical region and root tips and lower levels in immature and mature internodes and leaves.

It localises to the membrane. It carries out the reaction lathosterol + NADP(+) = 5alpha-cholesta-7,24-dien-3beta-ol + NADPH + H(+). Its function is as follows. Plays a critical role in the general process of plant cell elongation. This Pisum sativum (Garden pea) protein is Delta(24)-sterol reductase (DIM).